A 343-amino-acid chain; its full sequence is Heat-inducible transcription repressor HrcA (343 aa).

The protein belongs to the HrcA family.

Functionally, negative regulator of class I heat shock genes (grpE-dnaK-dnaJ and groELS operons). Prevents heat-shock induction of these operons. In Bacillus licheniformis (strain ATCC 14580 / DSM 13 / JCM 2505 / CCUG 7422 / NBRC 12200 / NCIMB 9375 / NCTC 10341 / NRRL NRS-1264 / Gibson 46), this protein is Heat-inducible transcription repressor HrcA.